The following is a 777-amino-acid chain: Penicillin-binding protein 1B (777 aa).

Over 1–30 the chain is Cytoplasmic; it reads MTRKSSNRSRGRKARSGKSASSSKLQIWLG. The chain crosses the membrane as a helical; Signal-anchor for type II membrane protein span at residues 31-52; sequence RIWSIGWKLALTLAAVLVFIGI. Over 53-777 the chain is Periplasmic; sequence YLDSMIKQRF…TEWIKKLFEW (725 aa). The transglycosylase stretch occupies residues 162 to 334; sequence LRLEPKLMGM…SYYNPMRYAE (173 aa). The active-site Proton donor; for transglycosylase activity is the Glu-200. Positions 415-709 are transpeptidase; sequence SKLEQAIHDQ…ASGALRVYAQ (295 aa). Ser-476 (acyl-ester intermediate; for transpeptidase activity) is an active-site residue.

This sequence in the N-terminal section; belongs to the glycosyltransferase 51 family. It in the C-terminal section; belongs to the transpeptidase family.

The protein resides in the cell inner membrane. The catalysed reaction is [GlcNAc-(1-&gt;4)-Mur2Ac(oyl-L-Ala-gamma-D-Glu-L-Lys-D-Ala-D-Ala)](n)-di-trans,octa-cis-undecaprenyl diphosphate + beta-D-GlcNAc-(1-&gt;4)-Mur2Ac(oyl-L-Ala-gamma-D-Glu-L-Lys-D-Ala-D-Ala)-di-trans,octa-cis-undecaprenyl diphosphate = [GlcNAc-(1-&gt;4)-Mur2Ac(oyl-L-Ala-gamma-D-Glu-L-Lys-D-Ala-D-Ala)](n+1)-di-trans,octa-cis-undecaprenyl diphosphate + di-trans,octa-cis-undecaprenyl diphosphate + H(+). It carries out the reaction Preferential cleavage: (Ac)2-L-Lys-D-Ala-|-D-Ala. Also transpeptidation of peptidyl-alanyl moieties that are N-acyl substituents of D-alanine.. It participates in cell wall biogenesis; peptidoglycan biosynthesis. Functionally, cell wall formation. Synthesis of cross-linked peptidoglycan from the lipid intermediates. The enzyme has a penicillin-insensitive transglycosylase N-terminal domain (formation of linear glycan strands) and a penicillin-sensitive transpeptidase C-terminal domain (cross-linking of the peptide subunits). This is Penicillin-binding protein 1B (mrcB) from Vibrio cholerae serotype O1 (strain ATCC 39315 / El Tor Inaba N16961).